The primary structure comprises 199 residues: Recombination protein RecR (199 aa).

The C4-type zinc finger occupies 58-73 (CKKCFNLTSEEECEIC). Residues 81-175 (KIICVVAETK…KVTRIAYGLP (95 aa)) form the Toprim domain.

It belongs to the RecR family.

In terms of biological role, may play a role in DNA repair. It seems to be involved in an RecBC-independent recombinational process of DNA repair. It may act with RecF and RecO. The protein is Recombination protein RecR of Prochlorococcus marinus subsp. pastoris (strain CCMP1986 / NIES-2087 / MED4).